We begin with the raw amino-acid sequence, 115 residues long: NADH-ubiquinone oxidoreductase chain 3 (115 aa).

The next 3 helical transmembrane spans lie at Phe3–Trp23, Phe55–Leu75, and Leu84–Tyr104.

Belongs to the complex I subunit 3 family. In terms of assembly, core subunit of respiratory chain NADH dehydrogenase (Complex I) which is composed of 45 different subunits. Interacts with TMEM186. Interacts with TMEM242.

Its subcellular location is the mitochondrion inner membrane. It catalyses the reaction a ubiquinone + NADH + 5 H(+)(in) = a ubiquinol + NAD(+) + 4 H(+)(out). Its function is as follows. Core subunit of the mitochondrial membrane respiratory chain NADH dehydrogenase (Complex I) which catalyzes electron transfer from NADH through the respiratory chain, using ubiquinone as an electron acceptor. Essential for the catalytic activity of complex I. This is NADH-ubiquinone oxidoreductase chain 3 from Homo sapiens (Human).